The chain runs to 307 residues: Oxygen-dependent coproporphyrinogen-III oxidase (307 aa).

Residue S99 coordinates substrate. A divalent metal cation-binding residues include H103 and H113. H113 (proton donor) is an active-site residue. Position 115–117 (115–117 (NVR)) interacts with substrate. A divalent metal cation contacts are provided by H152 and H182. The segment at 247–282 (YVEFNLVFDRGTLFGLQSGGRTESILLSMPPTAGWR) is important for dimerization. 265–267 (GGR) lines the substrate pocket.

This sequence belongs to the aerobic coproporphyrinogen-III oxidase family. In terms of assembly, homodimer. It depends on a divalent metal cation as a cofactor.

It localises to the cytoplasm. The catalysed reaction is coproporphyrinogen III + O2 + 2 H(+) = protoporphyrinogen IX + 2 CO2 + 2 H2O. Its pathway is porphyrin-containing compound metabolism; protoporphyrin-IX biosynthesis; protoporphyrinogen-IX from coproporphyrinogen-III (O2 route): step 1/1. Functionally, involved in the heme biosynthesis. Catalyzes the aerobic oxidative decarboxylation of propionate groups of rings A and B of coproporphyrinogen-III to yield the vinyl groups in protoporphyrinogen-IX. This chain is Oxygen-dependent coproporphyrinogen-III oxidase, found in Burkholderia mallei (strain SAVP1).